The following is a 64-amino-acid chain: Large ribosomal subunit protein bL35 (64 aa).

The protein belongs to the bacterial ribosomal protein bL35 family.

The sequence is that of Large ribosomal subunit protein bL35 from Clavibacter michiganensis subsp. michiganensis (strain NCPPB 382).